Consider the following 180-residue polypeptide: Large ribosomal subunit protein uL5 (180 aa).

The protein belongs to the universal ribosomal protein uL5 family. In terms of assembly, part of the 50S ribosomal subunit; part of the 5S rRNA/L5/L18/L25 subcomplex. Contacts the 5S rRNA and the P site tRNA. Forms a bridge to the 30S subunit in the 70S ribosome.

Functionally, this is one of the proteins that bind and probably mediate the attachment of the 5S RNA into the large ribosomal subunit, where it forms part of the central protuberance. In the 70S ribosome it contacts protein S13 of the 30S subunit (bridge B1b), connecting the 2 subunits; this bridge is implicated in subunit movement. Contacts the P site tRNA; the 5S rRNA and some of its associated proteins might help stabilize positioning of ribosome-bound tRNAs. In Roseiflexus castenholzii (strain DSM 13941 / HLO8), this protein is Large ribosomal subunit protein uL5.